A 534-amino-acid chain; its full sequence is MASTSLSLPSLKLQFPSHTSSSSRKNSSSYRVSIRPIQASVSEIPPYISSPSQSPSSSSSPPVKQAKLPAQKVPGDYGLPLVGPWKDRLDYFYNQGKNEFFKSRIQKHQSTVFRTNMPPGPFISFNPNVVVLLDGKSFPVLFDVSKVEKKDLFTGTFMPSTDLTGGYRVLSYLDPSEPNHAKLKKLMFYLLSSRRNEVIPEFHNSYSELFETLENELSTKGKAGLNAANDQAAFNFLARSLYGINPQDTELGTDGPKLIGKWVLFQLHPLLILGLPKVLEDLVMHTFRLPPALVKKDYQRLYNFFYENSTSVLDEAEKIGISREEACHNLLFATCFNSFGGIKIFFPNMLKWIGRAGAKLHSQLAQEIRSVISSNSGKVTMAAMEKMPLMKSVVYESLRIEPPVASQYGRAKHDMVIESHDASFEIKEGELLYGYQPFATKDPKIFDRSEEFVADRFIGEEGEKLLKHVLWSNGSETENASINNKQCAGKDFVVLVSRLLLVELFLRYDSFEIEVGASPLGAAITLTSLRRASF.

Disordered regions lie at residues 1 to 31 (MAST…SSYR) and 43 to 71 (EIPP…LPAQ). The N-terminal 69 residues, 1–69 (MASTSLSLPS…SPPVKQAKLP (69 aa)), are a transit peptide targeting the chloroplast. Composition is skewed to low complexity over residues 17-31 (SHTS…SSYR) and 43-62 (EIPP…SSPP). Heme b contacts are provided by Lys-149, His-180, and Lys-184. 2 residues coordinate (13S)-hydroperoxy-(9Z,11E)-octadecadienoate: Asn-337 and Lys-343. A (13S)-hydroperoxy-(9Z,11E,15Z)-octadecatrienoate-binding site is contributed by Asn-337. Heme b is bound by residues Lys-485 and Cys-487.

It belongs to the cytochrome P450 family. Heme b is required as a cofactor. In terms of tissue distribution, expressed in flowers. Detected in stems and roots, but not in leaves and fruits under non-inducing conditions.

It localises to the plastid. Its subcellular location is the chloroplast. The catalysed reaction is (13S)-hydroperoxy-(9Z,11E,15Z)-octadecatrienoate = (9Z,13S,15Z)-12,13-epoxyoctadeca-9,11,15-trienoate + H2O. It catalyses the reaction (13S)-hydroperoxy-(9Z,11E)-octadecadienoate = (9Z,13S)-12,13-epoxyoctadeca-9,11-dienoate + H2O. Functionally, cytochrome P450 of the CYP74A subfamily involved in the biosynthesis of jasmonic acid from lipoxygenase-derived hydroperoxides of free fatty acids. Catalyzes the synthesis of unstable allene oxide, which is further converted spontaneously by hydrolysis or cyclization. Can use 13S-hydroperoxy-9(Z),11(E),15(Z)-octadecatrienoic acid (13-HPOT) and 13S-hydroperoxy-9(Z),11(E)-octadecadienoic acid (13-HPOD) as substrates. In Solanum lycopersicum (Tomato), this protein is Allene oxide synthase 1, chloroplastic.